Consider the following 655-residue polypeptide: Alpha-amylase (655 aa).

Residue Glu-123 is the Nucleophile of the active site. Asp-214 acts as the Proton donor in catalysis.

The protein belongs to the glycosyl hydrolase 57 family.

It catalyses the reaction Endohydrolysis of (1-&gt;4)-alpha-D-glucosidic linkages in polysaccharides containing three or more (1-&gt;4)-alpha-linked D-glucose units.. The protein is Alpha-amylase (amyA) of Pyrococcus abyssi (strain GE5 / Orsay).